Consider the following 364-residue polypeptide: Growth hormone secretagogue receptor type 1 (364 aa).

The Extracellular segment spans residues 1–40 (MWNATPSEEPEPNVTLDLDWDASPGNDSLSDELLPLFPAP). Residues N13 and N26 are each glycosylated (N-linked (GlcNAc...) asparagine). Residues 41 to 66 (LLAGVTATCVALFVVGISGNLLTMLV) traverse the membrane as a helical segment. Residues 67–72 (VSRFRE) lie on the Cytoplasmic side of the membrane. The chain crosses the membrane as a helical span at residues 73 to 96 (LRTTTNLYLSSMAFSDLLIFLCMP). Topologically, residues 97-117 (LDLVRLWQYRPWNFGDLLCKL) are extracellular. Cysteines 115 and 197 form a disulfide. The chain crosses the membrane as a helical span at residues 118–139 (FQFVSESCTYATVLTITALSVE). Residues 140–162 (RYFAICFPLRAKVVVTKGRVKLV) are Cytoplasmic-facing. A helical transmembrane segment spans residues 163–183 (ILVIWAVAFCSAGPIFVLVGV). Over 184 to 211 (EHENGTDPRDTNECRATEFAVRSGLLTV) the chain is Extracellular. Residue N187 is glycosylated (N-linked (GlcNAc...) asparagine). The chain crosses the membrane as a helical span at residues 212 to 235 (MVWVSSVFFFLPVFCLTVLYSLIG). Residues 236 to 263 (RKLWRRRGDAAVGSSLRDQNHKQTVKML) are Cytoplasmic-facing. Residues 264 to 285 (AVVVFAFILCWLPFHVGRYLFS) form a helical membrane-spanning segment. Over 286–302 (KSFEPGSLEIAQISQYC) the chain is Extracellular. A helical membrane pass occupies residues 303 to 326 (NLVSFVLFYLSAAINPILYNIMSK). Residues 327-364 (KYRVAVFKLLGFESFSQRKLSTLKDESSRAWTKSSINT) are Cytoplasmic-facing.

This sequence belongs to the G-protein coupled receptor 1 family.

Its subcellular location is the cell membrane. Its function is as follows. Receptor for ghrelin, coupled to G-alpha-11 proteins. Stimulates growth hormone secretion. Also binds other growth hormone releasing peptides (GHRP) (e.g. Met-enkephalin and GHRP-6) as well as non-peptide, low molecular weight secretagogues (e.g. L-692,429, MK-0677, adenosine). The protein is Growth hormone secretagogue receptor type 1 (Ghsr) of Mus musculus (Mouse).